A 220-amino-acid polypeptide reads, in one-letter code: 5'(3')-deoxyribonucleotidase, mitochondrial (220 aa).

The N-terminal 23 residues, 1 to 23 (MHRLRGCCARPRGAPLRAERSRA), are a transit peptide targeting the mitochondrion. Catalysis depends on aspartate 33, which acts as the Nucleophile. Positions 33 and 35 each coordinate Mg(2+). The Proton donor role is filled by aspartate 35. Aspartate 35, phenylalanine 41, phenylalanine 67, tryptophan 68, valine 69, tryptophan 88, threonine 122, and lysine 157 together coordinate substrate. Aspartate 168 is a Mg(2+) binding site.

This sequence belongs to the 5'(3')-deoxyribonucleotidase family. In terms of assembly, homodimer. Requires Mg(2+) as cofactor.

It is found in the mitochondrion. Its function is as follows. Dephosphorylates specifically the 5' and 2'(3')-phosphates of uracil and thymine deoxyribonucleotides, and so protects mitochondrial DNA replication from excess dTTP. Has only marginal activity towards dIMP and dGMP. This chain is 5'(3')-deoxyribonucleotidase, mitochondrial (Nt5m), found in Mus musculus (Mouse).